The following is a 666-amino-acid chain: Collagen alpha-1(XXV) chain (666 aa).

The segment at 1–24 is disordered; it reads MLVKKLAGKGGGRESGSEDPRPLG. The Cytoplasmic segment spans residues 1–33; that stretch reads MLVKKLAGKGGGRESGSEDPRPLGQRCAGTMPS. Over residues 11–21 the composition is skewed to basic and acidic residues; it reads GGRESGSEDPR. A helical; Signal-anchor for type II membrane protein transmembrane segment spans residues 34-54; it reads CTALATLLSVVAVAFCFYLGV. At 55 to 666 the chain is on the extracellular side; sequence KTNDLQARIA…GLPMPGCWQK (612 aa). Positions 116–168 are disordered; sequence LECNCPAGPPGKRGKRGRRGESGPPGQPGPQGPPGPKGDKGEQGDQGPRMVFP. In terms of domain architecture, Collagen-like 1 spans 121–164; the sequence is PAGPPGKRGKRGRRGESGPPGQPGPQGPPGPKGDKGEQGDQGPR. The span at 140–151 shows a compositional bias: pro residues; sequence PGQPGPQGPPGP. The tract at residues 181-188 is interaction with amyloid-beta peptide; the sequence is LIKRRLIK. 2 disordered regions span residues 189 to 428 and 445 to 666; these read GDQG…ATEI and LTVT…CWQK. Collagen-like domains are found at residues 192-247, 249-308, 311-370, 373-425, 455-514, 529-588, and 589-648; these read GQAG…QKGS, GAPG…PGSS, GIKG…AGPP, GERG…DPGA, GPQG…KGEK, GPPG…KGAM, and GEPG…DGLD. Pro residues predominate over residues 196 to 208; it reads PPGPPGPPGPRGP. The span at 230–245 shows a compositional bias: low complexity; it reads PGEQGLMGPLGPPGQK. The segment covering 280-290 has biased composition (basic and acidic residues); that stretch reads EPGKEGEKGDA. The segment covering 336-358 has biased composition (low complexity); the sequence is LPGIKGEPGFIGPQGEPGLPGLP. Composition is skewed to basic and acidic residues over residues 361-377 and 398-407; these read KGDRGEAGPPGRGERGD and SKGDRGDKGD. Low complexity predominate over residues 457–466; that stretch reads QGLQGPKGEQ. Residues 494-503 are compositionally biased toward gly residues; sequence GEKGGLGLPG. Residues 528-543 show a composition bias toward pro residues; it reads IGPPGPPGPHGPPGPM. Positions 615 to 638 are enriched in basic and acidic residues; it reads RGEKGDLGEKGEKGFRGVKGEKGE.

As to quaternary structure, forms homodimers and homotrimers. Binds to the fibrillized forms of amyloid-beta protein 40 (beta-APP40) and amyloid-betad protein 42 (beta-APP42). Found associated with beta-APP42 more frequently than with beta-APP40. In terms of processing, undergoes proteolytic cleavage by furin protease to yield the soluble collagen-like Alzheimer amyloid plaque component. Glycosylated. Post-translationally, hydroxylated on proline and lysine residues. In terms of tissue distribution, expressed predominantly in neurons with low levels also detected in heart, testis and eye.

Its subcellular location is the membrane. Functionally, inhibits fibrillization of amyloid-beta peptide during the elongation phase. Has also been shown to assemble amyloid fibrils into protease-resistant aggregates. Binds heparin. The protein is Collagen alpha-1(XXV) chain of Mus musculus (Mouse).